A 463-amino-acid polypeptide reads, in one-letter code: Probable mannan endo-1,4-beta-mannosidase F (463 aa).

Residues Met-1 to Ala-18 form the signal peptide. Positions Gln-19–Val-54 constitute a CBM1 domain. The segment at Ala-57 to Ile-78 is disordered. Over residues Ser-59–Ser-77 the composition is skewed to low complexity. The segment at Ser-75–Ser-118 is ser-rich linker. Residue Asn-87 is glycosylated (N-linked (GlcNAc...) asparagine). A compositionally biased stretch (low complexity) spans Ser-93–Ser-118. Residues Ser-93 to Lys-121 are disordered. The tract at residues Phe-119–Asn-463 is catalytic. Substrate contacts are provided by Trp-171 and Asn-285. The active-site Proton donor/acceptor is Glu-286. Tyr-361 contacts substrate. The active-site Nucleophile is Glu-395. Trp-424 lines the substrate pocket.

The protein belongs to the glycosyl hydrolase 5 (cellulase A) family.

Its subcellular location is the secreted. It catalyses the reaction Random hydrolysis of (1-&gt;4)-beta-D-mannosidic linkages in mannans, galactomannans and glucomannans.. Functionally, endo-1,4-mannanase, a crucial enzyme for depolymerization of seed galactomannans and wood galactoglucomannans. The polypeptide is Probable mannan endo-1,4-beta-mannosidase F (manF) (Aspergillus oryzae (strain ATCC 42149 / RIB 40) (Yellow koji mold)).